Consider the following 122-residue polypeptide: Large ribosomal subunit protein uL14 (122 aa).

This sequence belongs to the universal ribosomal protein uL14 family. Part of the 50S ribosomal subunit. Forms a cluster with proteins L3 and L19. In the 70S ribosome, L14 and L19 interact and together make contacts with the 16S rRNA in bridges B5 and B8.

Its function is as follows. Binds to 23S rRNA. Forms part of two intersubunit bridges in the 70S ribosome. This chain is Large ribosomal subunit protein uL14, found in Lactobacillus helveticus (strain DPC 4571).